A 334-amino-acid chain; its full sequence is Cathepsin J (334 aa).

Residues Met1–Gly17 form the signal peptide. The propeptide at Ala18–Gly113 is activation peptide. Residue Cys138 is part of the active site. N-linked (GlcNAc...) asparagine glycosylation is found at Asn217, Asn221, and Asn268. A disulfide bridge links Cys269 with Cys322. His276 is a catalytic residue. Residue Asn288 is glycosylated (N-linked (GlcNAc...) asparagine). The active site involves Asn300.

Belongs to the peptidase C1 family. As to expression, expressed specifically in placenta.

The protein resides in the lysosome. In Rattus norvegicus (Rat), this protein is Cathepsin J (Ctsj).